The primary structure comprises 161 residues: Cytochrome c-type biogenesis protein CcmE (161 aa).

Residues 1-8 (MNPRRKKR) lie on the Cytoplasmic side of the membrane. Residues 9 to 29 (LGLILALFVGISATVGLMLYA) traverse the membrane as a helical; Signal-anchor for type II membrane protein segment. Residues 30–161 (LNQNMDLFYT…TEQQKQGTGQ (132 aa)) lie on the Periplasmic side of the membrane. The heme site is built by His129 and Tyr133. The disordered stretch occupies residues 142–161 (MKKTHEPLQYTEQQKQGTGQ). The segment covering 151–161 (YTEQQKQGTGQ) has biased composition (polar residues).

Belongs to the CcmE/CycJ family.

The protein localises to the cell inner membrane. Its function is as follows. Heme chaperone required for the biogenesis of c-type cytochromes. Transiently binds heme delivered by CcmC and transfers the heme to apo-cytochromes in a process facilitated by CcmF and CcmH. This Aliivibrio fischeri (strain MJ11) (Vibrio fischeri) protein is Cytochrome c-type biogenesis protein CcmE.